Here is a 436-residue protein sequence, read N- to C-terminus: GTPase Der (436 aa).

EngA-type G domains follow at residues 4–167 (PTVA…PTEV) and 175–351 (IRFS…ESQN). GTP-binding positions include 10-17 (GRPNVGKS), 57-61 (DTGGI), 119-122 (NKVD), 181-188 (GRPNVGKS), 229-233 (DTAGM), and 294-297 (NKWD). The region spanning 352-436 (RRISSAVLND…PIHLIARKRK (85 aa)) is the KH-like domain.

It belongs to the TRAFAC class TrmE-Era-EngA-EngB-Septin-like GTPase superfamily. EngA (Der) GTPase family. As to quaternary structure, associates with the 50S ribosomal subunit.

Functionally, GTPase that plays an essential role in the late steps of ribosome biogenesis. The chain is GTPase Der from Streptococcus thermophilus (strain ATCC BAA-491 / LMD-9).